The following is a 623-amino-acid chain: Glutathione import ATP-binding protein GsiA (623 aa).

ABC transporter domains follow at residues 15–269 (VENL…RALL) and 314–564 (LRVR…RKLL). Residues 49 to 56 (GESGSGKS) and 357 to 364 (GESGSGKS) each bind ATP.

It belongs to the ABC transporter superfamily. Glutathione importer (TC 3.A.1.5.11) family. As to quaternary structure, the complex is composed of two ATP-binding proteins (GsiA), two transmembrane proteins (GsiC and GsiD) and a solute-binding protein (GsiB).

Its subcellular location is the cell inner membrane. It catalyses the reaction glutathione(out) + ATP + H2O = glutathione(in) + ADP + phosphate + H(+). Its function is as follows. Part of the ABC transporter complex GsiABCD involved in glutathione import. Responsible for energy coupling to the transport system. This is Glutathione import ATP-binding protein GsiA from Shigella boydii serotype 4 (strain Sb227).